Reading from the N-terminus, the 429-residue chain is 3-phosphoshikimate 1-carboxyvinyltransferase (429 aa).

3-phosphoshikimate contacts are provided by Lys-11, Ser-12, and Arg-16. Phosphoenolpyruvate is bound at residue Lys-11. Positions 82 and 110 each coordinate phosphoenolpyruvate. Residues Ser-155, Gln-157, Asp-302, and Lys-329 each coordinate 3-phosphoshikimate. Phosphoenolpyruvate is bound at residue Gln-157. Asp-302 serves as the catalytic Proton acceptor. Arg-333 and Arg-385 together coordinate phosphoenolpyruvate.

The protein belongs to the EPSP synthase family. As to quaternary structure, monomer.

Its subcellular location is the cytoplasm. The catalysed reaction is 3-phosphoshikimate + phosphoenolpyruvate = 5-O-(1-carboxyvinyl)-3-phosphoshikimate + phosphate. It functions in the pathway metabolic intermediate biosynthesis; chorismate biosynthesis; chorismate from D-erythrose 4-phosphate and phosphoenolpyruvate: step 6/7. Its function is as follows. Catalyzes the transfer of the enolpyruvyl moiety of phosphoenolpyruvate (PEP) to the 5-hydroxyl of shikimate-3-phosphate (S3P) to produce enolpyruvyl shikimate-3-phosphate and inorganic phosphate. This is 3-phosphoshikimate 1-carboxyvinyltransferase from Helicobacter pylori (strain HPAG1).